A 301-amino-acid polypeptide reads, in one-letter code: MSVRSAEYPRPKHFLVHLSDTHLVAQGELYDAVDASTRLREVLSGIVASGARPDALIFTGDLTDQGHPDAYAELKAIVEPVAAEIDAQVIWAMGNHDDRSTFRSLLLGEDATDHPVDNVYDLDGLRVITLDSSVPGHHYGEISDRQLDWLRSELAVPAPDGTILALHHPPVPCIQDLAVLVELRDQSRLADVLRGSDVRAILAGHLHYSTTATFAGIPVSVASSTCYTQDLNVEVGGQRGRDGAQGCNLVHVYDETIVHSVVPLGAHVTVGEPVDADEGARRLSAAGIRILESEKAGRSIV.

Residues aspartate 20, histidine 22, aspartate 61, asparagine 95, histidine 167, histidine 205, and histidine 207 each contribute to the Fe cation site. AMP contacts are provided by residues histidine 22, aspartate 61, and 95–96; that span reads NH. Histidine 207 is an AMP binding site.

Belongs to the cyclic nucleotide phosphodiesterase class-III family. Fe(2+) is required as a cofactor.

The protein is Probable cyclic nucleotide phosphodiesterase RER_40650 of Rhodococcus erythropolis (strain PR4 / NBRC 100887).